A 605-amino-acid chain; its full sequence is Protein DENND6A (605 aa).

The tract at residues 1–20 (MALPGPAVFGPGSRGSLDEA) is disordered. A uDENN domain is found at 60-239 (HCVCVVGFDL…KVRIPTCHDK (180 aa)). At Ser124 the chain carries Phosphoserine. The cDENN domain occupies 265 to 390 (EVDLFRCFCP…VKVKKLKNLK (126 aa)). One can recognise a dDENN domain in the interval 392 to 525 (LDSKPGVYTS…KTRRKEMTQK (134 aa)). Residue Lys507 is modified to N6-methyllysine.

It belongs to the DENND6 family.

Its subcellular location is the recycling endosome. It is found in the cytoplasm. In terms of biological role, guanine nucleotide exchange factor (GEF) for RAB14. Component of an endocytic recycling pathway that is required for the control of ADAM10 transport, shedding of N-cadherin/CDH2 by ADAM9 or ADAM10 and regulation of cell-cell junctions. Required for RAB14 recruitment to recycling endosomes. The chain is Protein DENND6A (Dennd6a) from Mus musculus (Mouse).